The following is an 829-amino-acid chain: Transcription activator GutR (829 aa).

Positions Ile-42–Gly-61 form a DNA-binding region, H-T-H motif. Gly-200–Thr-207 serves as a coordination point for ATP. TPR repeat units lie at residues His-697–Tyr-730, Ile-736–Ala-769, and Ile-775–Trp-808.

In terms of biological role, activator of the glucitol dehydrogenase gene (gutB). The chain is Transcription activator GutR (gutR) from Bacillus subtilis (strain 168).